The following is a 377-amino-acid chain: Glutamate 5-kinase (377 aa).

Position 22 (Lys-22) interacts with ATP. Substrate is bound by residues Ser-62, Asp-149, and Asn-161. ATP is bound by residues 181 to 182 (TD) and 223 to 229 (TGGMVTK). One can recognise a PUA domain in the interval 285-363 (RGTIVVDAGA…AQLKRFLGPQ (79 aa)).

The protein belongs to the glutamate 5-kinase family.

Its subcellular location is the cytoplasm. The enzyme catalyses L-glutamate + ATP = L-glutamyl 5-phosphate + ADP. It functions in the pathway amino-acid biosynthesis; L-proline biosynthesis; L-glutamate 5-semialdehyde from L-glutamate: step 1/2. In terms of biological role, catalyzes the transfer of a phosphate group to glutamate to form L-glutamate 5-phosphate. In Bifidobacterium longum (strain DJO10A), this protein is Glutamate 5-kinase.